The chain runs to 200 residues: Imidazoleglycerol-phosphate dehydratase (200 aa).

This sequence belongs to the imidazoleglycerol-phosphate dehydratase family.

The protein localises to the cytoplasm. The enzyme catalyses D-erythro-1-(imidazol-4-yl)glycerol 3-phosphate = 3-(imidazol-4-yl)-2-oxopropyl phosphate + H2O. Its pathway is amino-acid biosynthesis; L-histidine biosynthesis; L-histidine from 5-phospho-alpha-D-ribose 1-diphosphate: step 6/9. The polypeptide is Imidazoleglycerol-phosphate dehydratase (Prosthecochloris aestuarii (strain DSM 271 / SK 413)).